Here is a 689-residue protein sequence, read N- to C-terminus: Shutoff protein (689 aa).

Residues 1–24 (MSEEPVSGTTVEIEEDTHTPPNSP) form a disordered region. The segment at 226-289 (VMNNLLVKRA…SVLVTVVLEC (64 aa)) is binding to host EIF4G. The RRM domain maps to 292–410 (RLFTSKDMVK…PLYTETSQRL (119 aa)). Tyr309 and Tyr627 each carry phosphotyrosine; by host. Residues 625-689 (GQYLDPHTGE…GEPDVRGTTS (65 aa)) form a disordered region. Residues 645–655 (SGHEFQGDGRH) are compositionally biased toward basic and acidic residues. The span at 656–675 (REPKRGRHFRQRGGPRKPPR) shows a compositional bias: basic residues. The span at 678-689 (AGGEPDVRGTTS) shows a compositional bias: basic and acidic residues.

This sequence belongs to the adenoviridae shutoff protein family. Monomer. Interacts with hexon protein; this interaction allows chaperoning and trimerization of hexon proteins. Interacts (via N-terminus) with host initiation factor EIF4G (via C-terminus). Interacts (via RRM domain) with viral mRNAs that contain the tripartite leader; this interaction allows ribosome shunting and expression of viral late mRNAs. Might be cleaved by the viral protease. In terms of processing, phosphorylated. Tyrosine phosphorylation enhances preferential binding to tripartite leader mRNAs and allows ribosome shunting. Post-translationally, methylated. Asymmetric dimethylation by host PRMT1 of the Arg/Gly-rich region may regulate shutoff protein binding to hexon and promote the capsid assembly in the nucleus.

The protein localises to the host cytoplasm. Functionally, protein that inhibits host translation while promoting late viral translation by ribosome shunting. Blocks host cap-dependent translation by binding to eIF4G, displacing MKNK1 from cap initiation complexes and preventing EIF4E phosphorylation. Binds to the tripartite leader sequence of viral late mRNAs and recruits host eIF4G, PABPC1/poly-A binding protein and 40S ribosomes subunits on viral mRNAs, allowing ribosome shunting and efficient translation of late viral mRNAs even though conventional translation via ribosome scanning from the cap has been shut off in the host cell. During assembly, acts as a chaperone protein that helps hexon proteins assembly into trimers. The polypeptide is Shutoff protein (Canis lupus familiaris (Dog)).